Here is a 100-residue protein sequence, read N- to C-terminus: Urease subunit gamma (100 aa).

The protein belongs to the urease gamma subunit family. As to quaternary structure, heterotrimer of UreA (gamma), UreB (beta) and UreC (alpha) subunits. Three heterotrimers associate to form the active enzyme.

It is found in the cytoplasm. The enzyme catalyses urea + 2 H2O + H(+) = hydrogencarbonate + 2 NH4(+). It participates in nitrogen metabolism; urea degradation; CO(2) and NH(3) from urea (urease route): step 1/1. This is Urease subunit gamma from Methylibium petroleiphilum (strain ATCC BAA-1232 / LMG 22953 / PM1).